A 620-amino-acid polypeptide reads, in one-letter code: MAU2 chromatid cohesion factor homolog (620 aa).

TPR repeat units lie at residues 90 to 123 (FDTA…SQHN), 445 to 478 (GSFY…ANAE), and 485 to 518 (SCSL…ASKI).

Belongs to the SCC4/mau-2 family. Component of the cohesin loading complex.

It is found in the nucleus. The protein resides in the nucleoplasm. In terms of biological role, required for association of the cohesin complex with chromatin during interphase. Plays a role in sister chromatid cohesion and normal progression through prometaphase. The polypeptide is MAU2 chromatid cohesion factor homolog (Aedes aegypti (Yellowfever mosquito)).